A 354-amino-acid chain; its full sequence is Probable cinnamyl alcohol dehydrogenase 5 (354 aa).

Cys43 contacts Zn(2+). Ser45 is a binding site for NADP(+). The Zn(2+) site is built by His65, Glu66, Cys96, Cys99, Cys102, Cys110, and Cys159. NADP(+) contacts are provided by residues Thr163, 184-189 (GLGGLG), 207-212 (SSSPGK), Thr247, Gly271, and 294-296 (SCI).

This sequence belongs to the zinc-containing alcohol dehydrogenase family. In terms of assembly, homodimer. Zn(2+) is required as a cofactor.

It carries out the reaction (E)-cinnamyl alcohol + NADP(+) = (E)-cinnamaldehyde + NADPH + H(+). The enzyme catalyses (E)-coniferol + NADP(+) = (E)-coniferaldehyde + NADPH + H(+). It catalyses the reaction (E)-sinapyl alcohol + NADP(+) = (E)-sinapaldehyde + NADPH + H(+). The catalysed reaction is (E)-4-coumaroyl alcohol + NADP(+) = (E)-4-coumaraldehyde + NADPH + H(+). It carries out the reaction (E)-caffeyl alcohol + NADP(+) = (E)-caffeyl aldehyde + NADPH + H(+). It participates in aromatic compound metabolism; phenylpropanoid biosynthesis. Its function is as follows. Involved in lignin biosynthesis. Catalyzes the final step specific for the production of lignin monomers. Catalyzes the NADPH-dependent reduction of coniferaldehyde, 5-hydroxyconiferaldehyde, sinapaldehyde, 4-coumaraldehyde and caffeyl aldehyde to their respective alcohols. In Oryza sativa subsp. japonica (Rice), this protein is Probable cinnamyl alcohol dehydrogenase 5.